Consider the following 337-residue polypeptide: Ornithine carbamoyltransferase, catabolic (337 aa).

Carbamoyl phosphate is bound by residues 57-60 (STRT), Gln-84, Arg-108, and 135-138 (HPTQ). L-ornithine contacts are provided by residues Asn-167, Asp-231, and 235–236 (SM). Carbamoyl phosphate-binding positions include 272–273 (CL) and Arg-317.

It belongs to the aspartate/ornithine carbamoyltransferase superfamily. OTCase family.

Its subcellular location is the cytoplasm. The enzyme catalyses carbamoyl phosphate + L-ornithine = L-citrulline + phosphate + H(+). It participates in amino-acid degradation; L-arginine degradation via ADI pathway; carbamoyl phosphate from L-arginine: step 2/2. Its function is as follows. Reversibly catalyzes the transfer of the carbamoyl group from carbamoyl phosphate (CP) to the N(epsilon) atom of ornithine (ORN) to produce L-citrulline. In Streptococcus ratti, this protein is Ornithine carbamoyltransferase, catabolic.